We begin with the raw amino-acid sequence, 420 residues long: Probable acetate kinase (420 aa).

N10 is a Mg(2+) binding site. ATP is bound at residue K17. R97 lines the substrate pocket. The active-site Proton donor/acceptor is D153. Position 213-217 (213-217 (HIGSG)) interacts with ATP. E403 is a binding site for Mg(2+).

It belongs to the acetokinase family. Mg(2+) is required as a cofactor.

It carries out the reaction acetate + ATP = acetyl phosphate + ADP. It participates in metabolic intermediate biosynthesis; acetyl-CoA biosynthesis; acetyl-CoA from acetate: step 1/2. The sequence is that of Probable acetate kinase from Emericella nidulans (strain FGSC A4 / ATCC 38163 / CBS 112.46 / NRRL 194 / M139) (Aspergillus nidulans).